The sequence spans 315 residues: Calumenin (315 aa).

The N-terminal stretch at 1 to 19 (MDLRQFLLCLSLCTAFALS) is a signal peptide. The residue at position 47 (Tyr-47) is a Phosphotyrosine. Thr-65 is subject to Phosphothreonine. 6 consecutive EF-hand domains span residues 68–103 (ESKE…AQKR), 104–139 (WIHE…YVLD), 151–186 (QMMV…DEYD), 188–223 (MKDI…HDGN), 229–264 (WVKT…SDYD), and 265–300 (HAEA…FVGS). At Ser-69 the chain carries Phosphoserine. Positions 81, 83, 85, 92, 117, 119, 121, and 128 each coordinate Ca(2+). Asn-131 carries N-linked (GlcNAc...) asparagine glycosylation. Position 164 (Asp-164) interacts with Ca(2+). Lys-165 is subject to N6-acetyllysine. Ca(2+) is bound by residues Asp-166, Asp-168, Glu-175, Asp-201, Asn-203, Asp-205, Glu-212, Asp-242, Asn-244, Asp-246, Arg-248, and Glu-253. Position 254 is a phosphothreonine (Thr-254). 2 positions are modified to phosphoserine: Ser-261 and Ser-277. Ca(2+)-binding residues include Asp-278, Asn-280, Asp-282, Lys-284, and Glu-289. The short motif at 312-315 (HDEF) is the Prevents secretion from ER element.

It belongs to the CREC family. As to quaternary structure, interacts with GGCX.

Its subcellular location is the endoplasmic reticulum membrane. It localises to the golgi apparatus. The protein resides in the secreted. The protein localises to the melanosome. It is found in the sarcoplasmic reticulum lumen. Involved in regulation of vitamin K-dependent carboxylation of multiple N-terminal glutamate residues. Seems to inhibit gamma-carboxylase GGCX. Binds 7 calcium ions with a low affinity. In Mesocricetus auratus (Golden hamster), this protein is Calumenin (CALU).